A 464-amino-acid polypeptide reads, in one-letter code: ATP synthase subunit beta 1 (464 aa).

Position 153 to 160 (Gly153 to Thr160) interacts with ATP.

The protein belongs to the ATPase alpha/beta chains family. As to quaternary structure, F-type ATPases have 2 components, CF(1) - the catalytic core - and CF(0) - the membrane proton channel. CF(1) has five subunits: alpha(3), beta(3), gamma(1), delta(1), epsilon(1). CF(0) has three main subunits: a(1), b(2) and c(9-12). The alpha and beta chains form an alternating ring which encloses part of the gamma chain. CF(1) is attached to CF(0) by a central stalk formed by the gamma and epsilon chains, while a peripheral stalk is formed by the delta and b chains.

It is found in the cell inner membrane. It carries out the reaction ATP + H2O + 4 H(+)(in) = ADP + phosphate + 5 H(+)(out). Functionally, produces ATP from ADP in the presence of a proton gradient across the membrane. The catalytic sites are hosted primarily by the beta subunits. This chain is ATP synthase subunit beta 1, found in Burkholderia mallei (strain SAVP1).